The primary structure comprises 333 residues: Antimicrobial peptides (333 aa).

An N-terminal signal peptide occupies residues 1 to 23 (MVQKGVVFGVLLILFICSTLTSA). A disordered region spans residues 23–52 (ADSKPNPTKEEEPAKKPDEVSVKSGGPEVS). Positions 24–54 (DSKPNPTKEEEPAKKPDEVSVKSGGPEVSED) are cleaved as a propeptide — acidic peptide 1. Residues 29 to 43 (PTKEEEPAKKPDEVS) show a composition bias toward basic and acidic residues. Gln55 is modified (pyrrolidone carboxylic acid). 2 disulfide bridges follow: Cys60–Cys70 and Cys61–Cys74. Positions 75 to 102 (ANAEEAAAAIPEASEELAQEEAPVYSED) are cleaved as a propeptide — acidic peptide 2. Gln103 carries the post-translational modification Pyrrolidone carboxylic acid. 2 cysteine pairs are disulfide-bonded: Cys108–Cys118 and Cys109–Cys122. Positions 123-148 (QNAEEAAAAIPEATEKAQEAPVYSED) are cleaved as a propeptide — acidic peptide 3. Gln149 is modified (pyrrolidone carboxylic acid). 2 cysteine pairs are disulfide-bonded: Cys154/Cys164 and Cys155/Cys168. Positions 169-196 (QNAEEAAAAVAIPEASEKAQEGPVYSED) are cleaved as a propeptide — acidic peptide 4. Position 197 is a pyrrolidone carboxylic acid (Gln197). 2 disulfides stabilise this stretch: Cys202–Cys212 and Cys203–Cys216. Residues 217 to 232 (SNAADEVATPEDVEPG) constitute a propeptide, acidic peptide 5. Position 233 is a pyrrolidone carboxylic acid (Gln233). 2 disulfides stabilise this stretch: Cys238-Cys248 and Cys239-Cys252. The propeptide at 253-278 (HNAAEEATLKAFEEEAAREQPVYSED) is acidic peptide 6. Gln279 is subject to Pyrrolidone carboxylic acid. Cystine bridges form between Cys284/Cys294 and Cys285/Cys298. A propeptide spans 299–333 (QSAEEAAAFQAGEVTASLMLIMFKACPCMGPVPSV) (acidic peptide 7).

Post-translationally, the N-terminal of all peptides are blocked. The 4 cysteine residues of all peptides are involved in intrachain disulfide bonds.

Its subcellular location is the secreted. Its function is as follows. Plays a role in the defense of the germinating seed against microorganisms, by inhibiting the growth of a range of filamentous fungi and bacteria, especially Gram-positive bacteria. Not cytotoxic for cultured human cells and are the smallest known plant-derived antimicrobial peptides. Peptide IB-AMP4 has a higher antifungal activity than IB-AMP1. The sequence is that of Antimicrobial peptides (AMP) from Impatiens balsamina (Balsam).